A 268-amino-acid chain; its full sequence is Phosphatidylglycerol--prolipoprotein diacylglyceryl transferase (268 aa).

4 helical membrane-spanning segments follow: residues 14–34, 57–77, 90–110, and 117–137; these read LGPI…FAGW, LTFY…IIFY, FFLW…LIAF, and IGAN…IGLG. Arginine 140 is an a 1,2-diacyl-sn-glycero-3-phospho-(1'-sn-glycerol) binding site. The next 3 helical transmembrane spans lie at 174-194, 200-220, and 238-258; these read QLFE…LVTI, YLVL…CEFF, and GQIL…AVFI.

It belongs to the Lgt family.

The protein resides in the cell inner membrane. It catalyses the reaction L-cysteinyl-[prolipoprotein] + a 1,2-diacyl-sn-glycero-3-phospho-(1'-sn-glycerol) = an S-1,2-diacyl-sn-glyceryl-L-cysteinyl-[prolipoprotein] + sn-glycerol 1-phosphate + H(+). The protein operates within protein modification; lipoprotein biosynthesis (diacylglyceryl transfer). In terms of biological role, catalyzes the transfer of the diacylglyceryl group from phosphatidylglycerol to the sulfhydryl group of the N-terminal cysteine of a prolipoprotein, the first step in the formation of mature lipoproteins. This is Phosphatidylglycerol--prolipoprotein diacylglyceryl transferase from Francisella tularensis subsp. holarctica (strain FTNF002-00 / FTA).